The sequence spans 832 residues: Conserved oligomeric Golgi complex subunit 5 (832 aa).

Composition is skewed to pro residues over residues 1–11 (MALPPSSPSPS) and 23–38 (NPPP…PPQT). Residues 1–49 (MALPPSSPSPSSPSLQRLSTFKNPPPSSLSSGAPPPQTPSSSSSSPLDS) are disordered. The span at 39–49 (PSSSSSSPLDS) shows a compositional bias: low complexity.

The protein belongs to the COG5 family. In terms of assembly, homodimer. Component of the conserved oligomeric Golgi complex which is composed of eight different subunits and is required for normal Golgi morphology and localization. Interacts with COG3, COG6, COG7 and COG8.

Its subcellular location is the golgi apparatus membrane. Its function is as follows. Required for normal Golgi function. This Arabidopsis thaliana (Mouse-ear cress) protein is Conserved oligomeric Golgi complex subunit 5.